A 107-amino-acid polypeptide reads, in one-letter code: Phosphoribosyl-ATP pyrophosphatase (107 aa).

The protein belongs to the PRA-PH family.

The protein localises to the cytoplasm. The enzyme catalyses 1-(5-phospho-beta-D-ribosyl)-ATP + H2O = 1-(5-phospho-beta-D-ribosyl)-5'-AMP + diphosphate + H(+). It functions in the pathway amino-acid biosynthesis; L-histidine biosynthesis; L-histidine from 5-phospho-alpha-D-ribose 1-diphosphate: step 2/9. In Bacillus cereus (strain ATCC 14579 / DSM 31 / CCUG 7414 / JCM 2152 / NBRC 15305 / NCIMB 9373 / NCTC 2599 / NRRL B-3711), this protein is Phosphoribosyl-ATP pyrophosphatase.